The sequence spans 60 residues: Large ribosomal subunit protein uL30 (60 aa).

The protein belongs to the universal ribosomal protein uL30 family. As to quaternary structure, part of the 50S ribosomal subunit.

The sequence is that of Large ribosomal subunit protein uL30 from Shewanella denitrificans (strain OS217 / ATCC BAA-1090 / DSM 15013).